A 305-amino-acid polypeptide reads, in one-letter code: Suppressor of activated egl-4 protein 2 (305 aa).

The tract at residues 138–168 (KRGYESDSSDVSGVSHCSDAKRRRGRPRKDE) is disordered. The segment at residues 158 to 170 (KRRRGRPRKDEEA) is a DNA-binding region (a.T hook).

As to quaternary structure, interacts with phosphorylated egl-4. May interact with itself. May be a component of a histone deacetylase complex containing saeg-2, saeg-1 and hda-2. Ubiquitously expressed.

It is found in the nucleus. Its function is as follows. As a likely component of a histone deacetylase complex, together with saeg-1 and hda-2, functions downstream of the cAMP-dependent kinase egl-4 to regulate the expression of genes required for egg-laying and foraging. The polypeptide is Suppressor of activated egl-4 protein 2 (Caenorhabditis elegans).